The primary structure comprises 143 residues: Ribonuclease H (143 aa).

An RNase H type-1 domain is found at 1 to 136 (MQEIEIFCDG…CDSLAKLEAQ (136 aa)). Mg(2+)-binding residues include aspartate 9, glutamate 47, aspartate 69, and aspartate 128.

It belongs to the RNase H family. Monomer. Requires Mg(2+) as cofactor.

It is found in the cytoplasm. The catalysed reaction is Endonucleolytic cleavage to 5'-phosphomonoester.. In terms of biological role, endonuclease that specifically degrades the RNA of RNA-DNA hybrids. The protein is Ribonuclease H of Helicobacter pylori (strain HPAG1).